The following is an 80-amino-acid chain: Exodeoxyribonuclease 7 small subunit (80 aa).

It belongs to the XseB family. In terms of assembly, heterooligomer composed of large and small subunits.

Its subcellular location is the cytoplasm. The catalysed reaction is Exonucleolytic cleavage in either 5'- to 3'- or 3'- to 5'-direction to yield nucleoside 5'-phosphates.. Its function is as follows. Bidirectionally degrades single-stranded DNA into large acid-insoluble oligonucleotides, which are then degraded further into small acid-soluble oligonucleotides. This Pseudomonas aeruginosa (strain LESB58) protein is Exodeoxyribonuclease 7 small subunit.